The following is a 1120-amino-acid chain: Transcriptional repressor NF-X1 (1120 aa).

Residues 9–26 are interaction with PABPC1 and PABC4; that stretch reads GTFKFNTDAAEFIPQEKK. A disordered region spans residues 22–295; the sequence is PQEKKNSGLN…LNERPAKSTC (274 aa). A phosphoserine mark is found at Ser-50, Ser-82, and Ser-95. The span at 73–106 shows a compositional bias: polar residues; the sequence is YHPSGSKPKSQQTSFQSSPCNKSPKSHGLQNQPW. A compositionally biased stretch (basic residues) spans 111-120; the sequence is NEKHHIRVKK. Over residues 124–141 the composition is skewed to polar residues; sequence LAEQTSDTAGLESSTRSE. Phosphoserine occurs at positions 129 and 150. Basic and acidic residues-rich tracts occupy residues 142-159, 188-202, 222-254, and 282-291; these read SGTD…KEVV, LKCE…KPED, SSRK…EGAR, and PKDDLNERPA. Ser-326 is subject to Phosphoserine. The segment at 358–409 adopts an RING-type; atypical zinc-finger fold; it reads CMVCCELVRVTAPVWSCQSCYHVFHLNCIKKWARSPASQADGQSGWRCPACQ. 8 consecutive NF-X1-type zinc fingers follow at residues 453 to 471, 506 to 525, 567 to 586, 632 to 655, 694 to 713, 721 to 740, 832 to 854, and 863 to 884; these read CPHS…PCPA, CGQH…PCQI, CGNH…QCPR, CGSL…PCSR, CGRH…KCPL, CGLH…TCWQ, CGMH…PCKQ, and CGHP…ACKA. An R3H domain is found at 994–1062; that stretch reads LKFVSDVEKE…KRNVVVTAIR (69 aa). The segment at 1081–1109 is disordered; that stretch reads QARPPPPIPHHRHQSDKNPGSSNLQKITK. The span at 1097–1106 shows a compositional bias: polar residues; it reads KNPGSSNLQK.

Belongs to the NFX1 family. Isoform 1 interacts with PABPC1 and PABPC4. In terms of assembly, (Microbial infection) Isoform 1 and isoform 3 interact with human papillomavirus (HPV) type-16 E6 oncoprotein. Isoform 3 is polyubiquitinated in the presence of HPV16 E6 protein; which leads to proteasomal degradation. Isoform 1 is not polyubiquitinated.

It localises to the nucleus. In terms of biological role, binds to the X-box motif of MHC class II genes and represses their expression. May play an important role in regulating the duration of an inflammatory response by limiting the period in which MHC class II molecules are induced by interferon-gamma. Isoform 3 binds to the X-box motif of TERT promoter and represses its expression. Together with PABPC1 or PABPC4, isoform 1 acts as a coactivator for TERT expression. Mediates E2-dependent ubiquitination. This chain is Transcriptional repressor NF-X1 (NFX1), found in Homo sapiens (Human).